Consider the following 194-residue polypeptide: NAD(P)H:quinone oxidoreductase (194 aa).

It belongs to the SsuE family. As to quaternary structure, homotetramer. It depends on FMN as a cofactor.

The catalysed reaction is a quinone + NADH + H(+) = a quinol + NAD(+). It carries out the reaction a quinone + NADPH + H(+) = a quinol + NADP(+). Functionally, the enzyme apparently serves as a quinone reductase in connection with conjugation reactions of hydroquinones involved in detoxification pathways. In Solanum tuberosum (Potato), this protein is NAD(P)H:quinone oxidoreductase.